The primary structure comprises 159 residues: Transmembrane protein 92 (159 aa).

An N-terminal signal peptide occupies residues Met-1–Ala-26. The Extracellular portion of the chain corresponds to Lys-27–Arg-57. A helical transmembrane segment spans residues Ile-58–Cys-78. Over Phe-79–Phe-159 the chain is Cytoplasmic. A disordered region spans residues Glu-122–Phe-159.

It is found in the membrane. The chain is Transmembrane protein 92 (TMEM92) from Homo sapiens (Human).